We begin with the raw amino-acid sequence, 458 residues long: Light-independent protochlorophyllide reductase subunit N (458 aa).

Positions 20, 45, and 105 each coordinate [4Fe-4S] cluster.

This sequence belongs to the BchN/ChlN family. As to quaternary structure, protochlorophyllide reductase is composed of three subunits; ChlL, ChlN and ChlB. Forms a heterotetramer of two ChlB and two ChlN subunits. [4Fe-4S] cluster serves as cofactor.

The protein localises to the plastid. It localises to the chloroplast. The catalysed reaction is chlorophyllide a + oxidized 2[4Fe-4S]-[ferredoxin] + 2 ADP + 2 phosphate = protochlorophyllide a + reduced 2[4Fe-4S]-[ferredoxin] + 2 ATP + 2 H2O. Its pathway is porphyrin-containing compound metabolism; chlorophyll biosynthesis (light-independent). In terms of biological role, component of the dark-operative protochlorophyllide reductase (DPOR) that uses Mg-ATP and reduced ferredoxin to reduce ring D of protochlorophyllide (Pchlide) to form chlorophyllide a (Chlide). This reaction is light-independent. The NB-protein (ChlN-ChlB) is the catalytic component of the complex. The chain is Light-independent protochlorophyllide reductase subunit N from Angiopteris evecta (Mule's foot fern).